The chain runs to 382 residues: Gap junction alpha-1 protein (382 aa).

Residues 2 to 23 (GDWSALGKLLDKVQAYSTAGGK) are Cytoplasmic-facing. Ser-5 is modified (phosphoserine). A helical membrane pass occupies residues 24–44 (VWLSVLFIFRILLLGTAVESA). Residues 45 to 76 (WGDEQSAFRCNTQQPGCENVCYDKSFPISHVR) are Extracellular-facing. 2 disulfides stabilise this stretch: Cys-54–Cys-192 and Cys-187–Cys-198. A helical transmembrane segment spans residues 77–97 (FWVLQIIFVSVPTLLYLAHVF). Over 98–155 (YVMRKEEKLNKKEEELKVAQTDGVNVEMHLKQIEIKKFKYGIEEHGKVKMRGGLLRTY) the chain is Cytoplasmic. A Glycyl lysine isopeptide (Lys-Gly) (interchain with G-Cter in SUMO) cross-link involves residue Lys-144. Residues 156 to 176 (IISILFKSVFEVAFLLIQWYI) traverse the membrane as a helical segment. Over 177–207 (YGFSLSAVYTCKRDPCPHQVDCFLSRPTEKT) the chain is Extracellular. The chain crosses the membrane as a helical span at residues 208–228 (IFIIFMLVVSLVSLALNIIEL). Residues 229–382 (FYVFFKGVKD…SRPRPDDLEI (154 aa)) are Cytoplasmic-facing. Lys-237 participates in a covalent cross-link: Glycyl lysine isopeptide (Lys-Gly) (interchain with G-Cter in SUMO). Residues 244 to 382 (SDPYHATTGP…SRPRPDDLEI (139 aa)) are interaction with NOV. Position 247 is a phosphotyrosine (Tyr-247). 3 positions are modified to phosphoserine: Ser-255, Ser-257, and Ser-262. The interaction with UBQLN4 stretch occupies residues 264–382 (KYAYFNGCSS…SRPRPDDLEI (119 aa)). At Cys-271 the chain carries S-nitrosocysteine. Thr-275 carries the phosphothreonine modification. Residues Ser-306 and Ser-314 each carry the phosphoserine modification. Residues 317-332 (QNRMGQAGSTISNSHA) show a composition bias toward polar residues. The segment at 317–382 (QNRMGQAGST…SRPRPDDLEI (66 aa)) is disordered. Ser-325 is modified (phosphoserine; by CK1). Thr-326 is modified (phosphothreonine). A phosphoserine; by CK1 mark is found at Ser-328 and Ser-330. 2 positions are modified to phosphoserine: Ser-344 and Ser-365. Residues 362-374 (RPSSRASSRASSR) are compositionally biased toward low complexity. A Phosphoserine; by PKC/PRKCG and PKC/PRKCD modification is found at Ser-368. Phosphoserine is present on residues Ser-369 and Ser-373.

The protein belongs to the connexin family. Alpha-type (group II) subfamily. As to quaternary structure, a connexon is composed of a hexamer of connexins. Interacts with SGSM3. Interacts with RIC1/CIP150. Interacts with CNST and CSNK1D. Interacts (via C-terminus) with TJP1. Interacts (via C-terminus) with SRC (via SH3 domain). Interacts (not ubiquitinated) with UBQLN4 (via UBA domain). Interacts with NOV. Interacts with TMEM65. Interacts with ANK3/ANKG and PKP2. Post-translationally, phosphorylation at Ser-325, Ser-328 and Ser-330 by CK1 modulates gap junction assembly. Phosphorylated at Ser-368 by PRKCG; phosphorylation induces disassembly of gap junction plaques and inhibition of gap junction activity. Phosphorylation at Ser-368 by PRKCD triggers its internalization into small vesicles leading to proteasome-mediated degradation. In terms of processing, sumoylated with SUMO1, SUMO2 and SUMO3, which may regulate the level of functional Cx43 gap junctions at the plasma membrane. May be desumoylated by SENP1 or SENP2. S-nitrosylation at Cys-271 is enriched at the muscle endothelial gap junction in arteries, it augments channel permeability and may regulate of smooth muscle cell to endothelial cell communication. Post-translationally, acetylated in the developing cortex; leading to delocalization from the cell membrane.

It localises to the cell membrane. The protein localises to the cell junction. The protein resides in the gap junction. Its subcellular location is the endoplasmic reticulum. Gap junction protein that acts as a regulator of bladder capacity. A gap junction consists of a cluster of closely packed pairs of transmembrane channels, the connexons, through which materials of low MW diffuse from one cell to a neighboring cell. May play a critical role in the physiology of hearing by participating in the recycling of potassium to the cochlear endolymph. Negative regulator of bladder functional capacity: acts by enhancing intercellular electrical and chemical transmission, thus sensitizing bladder muscles to cholinergic neural stimuli and causing them to contract. May play a role in cell growth inhibition through the regulation of NOV expression and localization. Plays an essential role in gap junction communication in the ventricles. The protein is Gap junction alpha-1 protein (GJA1) of Oryctolagus cuniculus (Rabbit).